Reading from the N-terminus, the 757-residue chain is MIEAIGNQYVVARPVYSTKAFGEEFKKTYGHHKTFLDHLKGCCSCSSQKAKKIALSLFPIASWLPAYKIKEWLLSDIVSGISTGLVAVLQGLAFALLVNIPPAYGLYAAFFPVITYFFLGTSRHISVGPFPVLSMMVGVVVTRVASGSDTSPALSSSSAENDSMIEEKVMVAASVTVLSGIIQLLLGVLQIGFVVIYLSESLISGFTTAAAIHVLVSQLKFMLQLTVPAHSDPFSIFKVLESVFSQIQKTNIADLVTSVIILVVVFVVKEINQRYRSKLPVPIPIELIMTVIATGISYGCNFEQRFGVAVVGNMSLGFQPPITPSVEVFQDTIGDCFGIAIVGFAVAFSVASVYSLKYDYPIDGNQELIALGVSNIFTGAFKGFAGSTALSRSGVQESTGGKTQVAGLLSAVIVLIVIVAIGFLLQPLQKSVLAALALGNLKGMLMQFAEIGRLWKKDKYDCLIWIMTFIFAIVLGLGLGLAASVAFQLLTIVFRTQFPKCSTLANVGRSNIYKNKKNYADVYEPEGVKIFRCPSPIYFANIGFFKQKLIDAVGFNPLRILRKRNKALKKIRKLQKQGLIQVTPKGFICTSDGFKDSDEELDNNQIEELDQPINTTDLPFEIDWNADLPLNITIPKISLHSLILDFSAVSFLDISSMRGLRTILQEFIRIKVDVYIVGTDDDFIDKLARCEFFDDEVTDSIFFLTIHDAILHIWMKKDYSTSKFNSSQEKERKFDFTINTNGGLRNRECQVPVETKF.

The Cytoplasmic portion of the chain corresponds to 1–71 (MIEAIGNQYV…SWLPAYKIKE (71 aa)). A helical membrane pass occupies residues 72–92 (WLLSDIVSGISTGLVAVLQGL). Residue Ala93 is a topological domain, extracellular. The chain crosses the membrane as a helical span at residues 94–114 (FALLVNIPPAYGLYAAFFPVI). The Cytoplasmic portion of the chain corresponds to 115–124 (TYFFLGTSRH). Residues 125–145 (ISVGPFPVLSMMVGVVVTRVA) traverse the membrane as a helical segment. Topologically, residues 146–176 (SGSDTSPALSSSSAENDSMIEEKVMVAASVT) are extracellular. Asn161 is a glycosylation site (N-linked (GlcNAc...) asparagine). A helical transmembrane segment spans residues 177-197 (VLSGIIQLLLGVLQIGFVVIY). Over 198-201 (LSES) the chain is Cytoplasmic. Residues 202–222 (LISGFTTAAAIHVLVSQLKFM) form a helical membrane-spanning segment. The Extracellular segment spans residues 223–250 (LQLTVPAHSDPFSIFKVLESVFSQIQKT). A helical transmembrane segment spans residues 251-271 (NIADLVTSVIILVVVFVVKEI). Topologically, residues 272-278 (NQRYRSK) are cytoplasmic. Residues 279–299 (LPVPIPIELIMTVIATGISYG) traverse the membrane as a helical segment. Residues 300–335 (CNFEQRFGVAVVGNMSLGFQPPITPSVEVFQDTIGD) lie on the Extracellular side of the membrane. The chain crosses the membrane as a helical span at residues 336-356 (CFGIAIVGFAVAFSVASVYSL). The Cytoplasmic segment spans residues 357–367 (KYDYPIDGNQE). The helical transmembrane segment at 368–388 (LIALGVSNIFTGAFKGFAGST) threads the bilayer. Topologically, residues 389-404 (ALSRSGVQESTGGKTQ) are extracellular. The helical transmembrane segment at 405 to 425 (VAGLLSAVIVLIVIVAIGFLL) threads the bilayer. At 426–462 (QPLQKSVLAALALGNLKGMLMQFAEIGRLWKKDKYDC) the chain is on the cytoplasmic side. A helical membrane pass occupies residues 463–483 (LIWIMTFIFAIVLGLGLGLAA). The Extracellular portion of the chain corresponds to 484-757 (SVAFQLLTIV…ECQVPVETKF (274 aa)). Residues 518 to 713 (NYADVYEPEG…LTIHDAILHI (196 aa)) enclose the STAS domain. Positions 754-757 (ETKF) match the PDZ-binding motif.

Belongs to the SLC26A/SulP transporter (TC 2.A.53) family. As to quaternary structure, interacts with PDZK1, CFTR, SLC26A6 and NHERF1. Interacts (via PDZ-binding motif) with NHERF4 (via the third PDZ domain); interaction leads to decreased expression of SLC26A3 on the cell membrane resulting in its reduced exchanger activity. In terms of processing, N-glycosylation is required for efficient cell surface expression, and protection from proteolytic degradation.

Its subcellular location is the apical cell membrane. The protein localises to the membrane. It is found in the cell membrane. The catalysed reaction is hydrogencarbonate(in) + 2 chloride(out) = hydrogencarbonate(out) + 2 chloride(in). Mediates chloride-bicarbonate exchange with a chloride bicarbonate stoichiometry of 2:1 in the intestinal epithelia. Plays a role in the chloride and bicarbonate homeostasis during sperm epididymal maturation and capacitation. The sequence is that of Chloride anion exchanger (Slc26a3) from Rattus norvegicus (Rat).